The following is a 334-amino-acid chain: Heat-inducible transcription repressor HrcA (334 aa).

This sequence belongs to the HrcA family.

Its function is as follows. Negative regulator of class I heat shock genes (grpE-dnaK-dnaJ and groELS operons). Prevents heat-shock induction of these operons. In Paracidovorax citrulli (strain AAC00-1) (Acidovorax citrulli), this protein is Heat-inducible transcription repressor HrcA.